The following is a 1335-amino-acid chain: Bifunctional autolysin (1335 aa).

The first 29 residues, 1 to 29 (MAKKFNYKLPSMVALTLFGTAFTAHQANA), serve as a signal peptide directing secretion. 3 disordered regions span residues 51-88 (QAEK…QSTT), 100-262 (NEIS…KYKE), and 514-535 (WGTT…NNKL). Polar residues-rich tracts occupy residues 58 to 88 (EVTQ…QSTT), 100 to 127 (NEIS…VTKN), 143 to 155 (TDTN…QSVA), 176 to 223 (TASQ…NASG), and 244 to 258 (SLNN…TTSY). Residues 303–863 (VSSQKTSSLP…LSTQSTPAPK (561 aa)) are N-acetylmuramoyl-L-alanine amidase. Positions 515-531 (GTTSTKPSQPSKPSGGT) are enriched in low complexity. GW domains lie at 533 to 610 (NKLT…YNTA), 612 to 686 (APVK…TASK), 700 to 774 (TVTN…YNTA), 776 to 850 (SPVK…APSK), 868 to 943 (STQT…TQNI), 945 to 1020 (KQTQ…QNST), and 1023 to 1096 (QSTP…KEKI). Residues 864-1335 (QVKPSTQTVN…GKYFEIPIYK (472 aa)) form an endo-beta-N-acetylglucosaminidase region.

It in the N-terminal section; belongs to the N-acetylmuramoyl-L-alanine amidase 2 family. This sequence in the C-terminal section; belongs to the glycosyl hydrolase 73 family. In terms of assembly, oligomer; forms a ring structure at the cell surface which is important for efficient partitioning of daughter cells after cell division. Undergoes proteolytic processing to generate the two extracellular lytic enzymes, probably at the septal region on the cell surface.

The protein resides in the secreted. It carries out the reaction Hydrolyzes the link between N-acetylmuramoyl residues and L-amino acid residues in certain cell-wall glycopeptides.. The catalysed reaction is an N(4)-(oligosaccharide-(1-&gt;3)-[oligosaccharide-(1-&gt;6)]-beta-D-Man-(1-&gt;4)-beta-D-GlcNAc-(1-&gt;4)-alpha-D-GlcNAc)-L-asparaginyl-[protein] + H2O = an oligosaccharide-(1-&gt;3)-[oligosaccharide-(1-&gt;6)]-beta-D-Man-(1-&gt;4)-D-GlcNAc + N(4)-(N-acetyl-beta-D-glucosaminyl)-L-asparaginyl-[protein]. Its function is as follows. Endohydrolysis of the di-N-acetylchitobiosyl unit in high-mannose glycopeptides and glycoproteins containing the -[(Man)5(GlcNAc)2]-Asn structure. One N-acetyl-D-glucosamine residue remains attached to the protein; the rest of the oligosaccharide is released intact. Cleaves the peptidoglycan connecting the daughter cells at the end of the cell division cycle, resulting in the separation of the two newly divided cells. Acts as an autolysin in penicillin-induced lysis. This is Bifunctional autolysin (atl) from Staphylococcus epidermidis (strain ATCC 12228 / FDA PCI 1200).